The following is a 113-amino-acid chain: Cell cycle protein GpsB (113 aa).

A coiled-coil region spans residues 36-68 (LDMVIKDYSTFTQEIEALQAENIRLVQELDNAP).

The protein belongs to the GpsB family. Forms polymers through the coiled coil domains. Interacts with PBP1, MreC and EzrA.

Its subcellular location is the cytoplasm. Divisome component that associates with the complex late in its assembly, after the Z-ring is formed, and is dependent on DivIC and PBP2B for its recruitment to the divisome. Together with EzrA, is a key component of the system that regulates PBP1 localization during cell cycle progression. Its main role could be the removal of PBP1 from the cell pole after pole maturation is completed. Also contributes to the recruitment of PBP1 to the division complex. Not essential for septum formation. In Listeria monocytogenes serotype 4b (strain CLIP80459), this protein is Cell cycle protein GpsB.